Here is a 432-residue protein sequence, read N- to C-terminus: Adenylosuccinate synthetase (432 aa).

GTP is bound by residues 13-19 (GDEGKGK) and 41-43 (GHT). Aspartate 14 (proton acceptor) is an active-site residue. The Mg(2+) site is built by aspartate 14 and glycine 41. IMP is bound by residues 14–17 (DEGK), 39–42 (NAGH), threonine 130, arginine 144, glutamine 225, threonine 240, and arginine 304. The Proton donor role is filled by histidine 42. 300-306 (ATTGRPR) contributes to the substrate binding site. Residues arginine 306, 332–334 (KLD), and 415–417 (STG) each bind GTP.

It belongs to the adenylosuccinate synthetase family. Homodimer. The cofactor is Mg(2+).

It localises to the cytoplasm. It carries out the reaction IMP + L-aspartate + GTP = N(6)-(1,2-dicarboxyethyl)-AMP + GDP + phosphate + 2 H(+). It functions in the pathway purine metabolism; AMP biosynthesis via de novo pathway; AMP from IMP: step 1/2. Plays an important role in the de novo pathway of purine nucleotide biosynthesis. Catalyzes the first committed step in the biosynthesis of AMP from IMP. This is Adenylosuccinate synthetase from Hahella chejuensis (strain KCTC 2396).